Consider the following 170-residue polypeptide: Small ribosomal subunit protein uS5 (170 aa).

In terms of domain architecture, S5 DRBM spans 13-76; sequence LLEKLVGVRR…ENARKNMISV (64 aa).

The protein belongs to the universal ribosomal protein uS5 family. In terms of assembly, part of the 30S ribosomal subunit. Contacts proteins S4 and S8.

Functionally, with S4 and S12 plays an important role in translational accuracy. Located at the back of the 30S subunit body where it stabilizes the conformation of the head with respect to the body. The chain is Small ribosomal subunit protein uS5 from Nitrosococcus oceani (strain ATCC 19707 / BCRC 17464 / JCM 30415 / NCIMB 11848 / C-107).